We begin with the raw amino-acid sequence, 286 residues long: Polyamine aminopropyltransferase 1 (286 aa).

The PABS domain maps to 1–235; it reads MSDYQETLYQ…GAMTFAWGST (235 aa). Residue Gln30 participates in S-methyl-5'-thioadenosine binding. Residues His61 and Asp85 each coordinate spermidine. Residues Glu105 and 137–138 each bind S-methyl-5'-thioadenosine; that span reads DG. Asp155 (proton acceptor) is an active-site residue. 155–158 serves as a coordination point for spermidine; that stretch reads DSTD. Position 162 (Pro162) interacts with S-methyl-5'-thioadenosine.

Belongs to the spermidine/spermine synthase family. In terms of assembly, homodimer or homotetramer.

Its subcellular location is the cytoplasm. It catalyses the reaction S-adenosyl 3-(methylsulfanyl)propylamine + putrescine = S-methyl-5'-thioadenosine + spermidine + H(+). The protein operates within amine and polyamine biosynthesis; spermidine biosynthesis; spermidine from putrescine: step 1/1. Catalyzes the irreversible transfer of a propylamine group from the amino donor S-adenosylmethioninamine (decarboxy-AdoMet) to putrescine (1,4-diaminobutane) to yield spermidine. The sequence is that of Polyamine aminopropyltransferase 1 from Pseudomonas aeruginosa (strain ATCC 15692 / DSM 22644 / CIP 104116 / JCM 14847 / LMG 12228 / 1C / PRS 101 / PAO1).